A 270-amino-acid polypeptide reads, in one-letter code: MLTPPRTVVRRDGGLYALERALQRRGFRQVAGADEAGRGACAGPLVAAAAILPPGRRGEVDGLADSKLLTPASRERVYAEVIARASAYAVVVIPAAEVDLRGLHVCNLAAMRRALASLATPPEYVLTDGFGVDGLDVPGLAVWKGDRVAACVAAASVLAKVTRDRIMVELDLEFPGYGFAEHKGYITAEHSAALRERGPCPEHRFSYVNVATVSGRQGAPPRARRPLVAEADEAMERAGVVKGTVGVALGERPWAGASVGNDVAMEGGMG.

Residues 28–222 (RQVAGADEAG…VSGRQGAPPR (195 aa)) enclose the RNase H type-2 domain. A divalent metal cation-binding residues include Asp-34, Glu-35, and Asp-128.

This sequence belongs to the RNase HII family. Requires Mn(2+) as cofactor. The cofactor is Mg(2+).

The protein localises to the cytoplasm. It carries out the reaction Endonucleolytic cleavage to 5'-phosphomonoester.. Endonuclease that specifically degrades the RNA of RNA-DNA hybrids. The polypeptide is Ribonuclease HII (Salinispora tropica (strain ATCC BAA-916 / DSM 44818 / JCM 13857 / NBRC 105044 / CNB-440)).